We begin with the raw amino-acid sequence, 162 residues long: Protein NrdI (162 aa).

Belongs to the NrdI family.

Its function is as follows. Probably involved in ribonucleotide reductase function. The protein is Protein NrdI of Streptococcus pyogenes serotype M3 (strain ATCC BAA-595 / MGAS315).